Here is a 312-residue protein sequence, read N- to C-terminus: Pectinesterase inhibitor 10 (312 aa).

The N-terminal stretch at 1–25 is a signal peptide; that stretch reads MNILSQTQILHLSIAILLFITTSSS. 2 stretches are compositionally biased toward low complexity: residues 24–36 and 44–55; these read SSSL…SPSL and SPSSAPPSSLSP. Residues 24–141 form a disordered region; it reads SSSLSPSSSS…PSSSSSTYSN (118 aa). Residues 56 to 75 show a composition bias toward pro residues; that stretch reads SSPPPLSLSPSSPPPPPPSS. Low complexity-rich tracts occupy residues 76 to 85 and 93 to 104; these read SPLSSLSPSL and SPSSAPPSSLSP. Pro residues predominate over residues 105–124; it reads SSPPPLSLSPSSPPPPPPSS. Residues 125–137 are compositionally biased toward low complexity; sequence SPLSSLSPSSSSS. N-linked (GlcNAc...) asparagine glycans are attached at residues Asn141, Asn153, Asn185, and Asn200. Cys152 and Cys161 are oxidised to a cystine. Cys218 and Cys268 form a disulfide bridge.

The protein belongs to the PMEI family.

It is found in the secreted. The protein localises to the extracellular space. It localises to the apoplast. Its function is as follows. Pectin methylesterase (PME) inhibitor involved in the maintenance of cell wall integrity in response to necrotrophic pathogens. Modulates PME activity and pectin methylesterification during infection by Botrytis cinerea and contributes to resistance against the pathogen. The protein is Pectinesterase inhibitor 10 of Arabidopsis thaliana (Mouse-ear cress).